The following is a 272-amino-acid chain: tRNA pseudouridine synthase B (272 aa).

The active-site Nucleophile is aspartate 38.

It belongs to the pseudouridine synthase TruB family. Type 1 subfamily.

It catalyses the reaction uridine(55) in tRNA = pseudouridine(55) in tRNA. In terms of biological role, responsible for synthesis of pseudouridine from uracil-55 in the psi GC loop of transfer RNAs. The sequence is that of tRNA pseudouridine synthase B from Campylobacter jejuni (strain RM1221).